We begin with the raw amino-acid sequence, 576 residues long: Formate--tetrahydrofolate ligase 1 (576 aa).

69–76 (TPLGEGKT) contacts ATP.

The protein belongs to the formate--tetrahydrofolate ligase family.

The catalysed reaction is (6S)-5,6,7,8-tetrahydrofolate + formate + ATP = (6R)-10-formyltetrahydrofolate + ADP + phosphate. Its pathway is one-carbon metabolism; tetrahydrofolate interconversion. The protein is Formate--tetrahydrofolate ligase 1 of Rubrobacter xylanophilus (strain DSM 9941 / JCM 11954 / NBRC 16129 / PRD-1).